A 686-amino-acid chain; its full sequence is Potassium-transporting ATPase ATP-binding subunit (686 aa).

A run of 2 helical transmembrane segments spans residues 38-58 (VMFV…KDLV) and 64-84 (AAPL…VLFA). A disordered region spans residues 101-123 (ALRKMRKETTARRWKDGREERVP). Basic and acidic residues predominate over residues 107-123 (KETTARRWKDGREERVP). 2 helical membrane passes run 224–244 (ILLV…VPLA) and 257–277 (VALL…AIGI). Aspartate 308 acts as the 4-aspartylphosphate intermediate in catalysis. ATP is bound by residues aspartate 345, glutamate 349, 378 to 385 (FTAQTRMS), and lysine 399. Mg(2+) is bound by residues aspartate 522 and aspartate 526. Transmembrane regions (helical) follow at residues 592-612 (FAIL…LNVM), 620-640 (AVLS…PLAL), and 666-686 (VIVP…VGLA).

This sequence belongs to the cation transport ATPase (P-type) (TC 3.A.3) family. Type IA subfamily. As to quaternary structure, the system is composed of three essential subunits: KdpA, KdpB and KdpC.

The protein resides in the cell membrane. The enzyme catalyses K(+)(out) + ATP + H2O = K(+)(in) + ADP + phosphate + H(+). Its function is as follows. Part of the high-affinity ATP-driven potassium transport (or Kdp) system, which catalyzes the hydrolysis of ATP coupled with the electrogenic transport of potassium into the cytoplasm. This subunit is responsible for energy coupling to the transport system and for the release of the potassium ions to the cytoplasm. This is Potassium-transporting ATPase ATP-binding subunit from Myxococcus xanthus.